Consider the following 665-residue polypeptide: Long chain acyl-CoA synthetase 2 (665 aa).

228–239 is an ATP binding site; sequence IMYTSGTTGEPK. The fatty acid-binding stretch occupies residues 496 to 520; it reads DGWFHTGDIGEWQEDGSMKIIDRKK.

This sequence belongs to the ATP-dependent AMP-binding enzyme family. Mg(2+) is required as a cofactor. As to expression, expressed along the entire length of the stem, but expression was not entirely epidermal specific, with some expression found in internal cell layers as well. Was expressed in leave epidermal cells, flowers (sepals, petals, stamens, filaments and carpel), siliques and developing seeds. In roots, expression was detected in an internal cell layer, probably the endodermal layer.

The protein resides in the endoplasmic reticulum. It carries out the reaction a long-chain fatty acid + ATP + CoA = a long-chain fatty acyl-CoA + AMP + diphosphate. It functions in the pathway lipid metabolism; fatty acid metabolism. Activation of long-chain fatty acids for both synthesis of cellular lipids, and degradation via beta-oxidation. Acts in the cutin pathway. Preferentially uses palmitate, palmitoleate, oleate and linoleate. Required for repression of lateral root formation through its role in cutin biosynthesis and subsequent aerial tissues permeability. The sequence is that of Long chain acyl-CoA synthetase 2 (LACS2) from Arabidopsis thaliana (Mouse-ear cress).